The following is a 131-amino-acid chain: D-ribose pyranase (131 aa).

His20 serves as the catalytic Proton donor. Substrate is bound by residues Asp28, His98, and 120-122 (YAN).

The protein belongs to the RbsD / FucU family. RbsD subfamily. In terms of assembly, homodecamer.

It localises to the cytoplasm. The catalysed reaction is beta-D-ribopyranose = beta-D-ribofuranose. It participates in carbohydrate metabolism; D-ribose degradation; D-ribose 5-phosphate from beta-D-ribopyranose: step 1/2. Catalyzes the interconversion of beta-pyran and beta-furan forms of D-ribose. The protein is D-ribose pyranase of Clostridium tetani (strain Massachusetts / E88).